A 370-amino-acid polypeptide reads, in one-letter code: Tyrosyl-DNA phosphodiesterase 2 (370 aa).

Met-1 carries the post-translational modification N-acetylmethionine. The segment at 1–32 (MASGSSSDAAEPAGPAGRAASAPEAAQAEEDR) is disordered. Residues 9–26 (AAEPAGPAGRAASAPEAA) are compositionally biased toward low complexity. Lys-34 is covalently cross-linked (Glycyl lysine isopeptide (Lys-Gly) (interchain with G-Cter in SUMO2)). Position 99 is a phosphothreonine; by ACVR1B (Thr-99). Residues 130–134 (NIDGL) are interaction with 5' end of substrate DNA. Mg(2+) is bound by residues Asp-132 and Glu-162. An interaction with 5' end of substrate DNA region spans residues 236–241 (HLESTR). The active-site Proton donor/acceptor is Asp-272. 2 interaction with 5' end of substrate DNA regions span residues 274–276 (NLR) and 315–321 (LRIPAAY).

It belongs to the CCR4/nocturin family. In terms of assembly, interacts with TRAF2, TRAF3, TRAF5, TRAF6, TNFRSF8/CD30, TNFRSF5/CD40, TNFRSF1B/TNF-R75, ETS1, ETS2, FLI1, SMAD3 and ACVR1B/ALK4. Requires Mg(2+) as cofactor. It depends on Mn(2+) as a cofactor. In terms of processing, ubiquitinated by TRAF6. In terms of tissue distribution, widely expressed. Expressed in whole brain, cerebellum, quiescent cortical astrocytes and cerebellar granule neurons.

It is found in the nucleus. Its subcellular location is the PML body. The protein resides in the nucleolus. The protein localises to the cytoplasm. DNA repair enzyme that can remove a variety of covalent adducts from DNA through hydrolysis of a 5'-phosphodiester bond, giving rise to DNA with a free 5' phosphate. Catalyzes the hydrolysis of dead-end complexes between DNA and the topoisomerase 2 (TOP2) active site tyrosine residue. The 5'-tyrosyl DNA phosphodiesterase activity can enable the repair of TOP2-induced DNA double-strand breaks/DSBs without the need for nuclease activity, creating a 'clean' DSB with 5'-phosphate termini that are ready for ligation. Thereby, protects the transcription of many genes involved in neurological development and maintenance from the abortive activity of TOP2. Hydrolyzes 5'-phosphoglycolates on protruding 5' ends on DSBs due to DNA damage by radiation and free radicals. Has preference for single-stranded DNA or duplex DNA with a 4 base pair overhang as substrate. Also has 3'-tyrosyl DNA phosphodiesterase activity, but less efficiently and much slower than TDP1. Constitutes the major if not only 5'-tyrosyl-DNA phosphodiesterase in cells. Also acts as an adapter by participating in the specific activation of MAP3K7/TAK1 in response to TGF-beta: associates with components of the TGF-beta receptor-TRAF6-TAK1 signaling module and promotes their ubiquitination dependent complex formation. Involved in non-canonical TGF-beta induced signaling routes. May also act as a negative regulator of ETS1 and may inhibit NF-kappa-B activation. Acts as a regulator of ribosome biogenesis following stress. This is Tyrosyl-DNA phosphodiesterase 2 (Tdp2) from Mus musculus (Mouse).